The following is a 1839-amino-acid chain: Mannuronan C5-epimerase AlgE3 (1839 aa).

8 PbH1 repeats span residues Asp-133–Glu-155, Thr-157–Tyr-179, Gln-180–Thr-202, Thr-204–Arg-226, Thr-257–Gly-279, Ala-280–Val-302, Thr-320–Glu-342, and Thr-347–Gly-369. Over residues Ser-372 to Leu-386 the composition is skewed to polar residues. The tract at residues Ser-372–Asn-392 is disordered. 9 Hemolysin-type calcium-binding repeats span residues Glu-387 to Gly-399, Gly-406 to Leu-422, Gly-424 to Phe-440, Thr-538 to Asp-550, Gly-557 to Leu-573, Val-574 to Phe-591, Glu-695 to Asp-709, Gly-714 to Leu-730, and Gly-732 to Phe-748. PbH1 repeat units follow at residues Asp-975–Glu-997, Thr-999–Tyr-1021, Leu-1022–Thr-1044, Thr-1046–Arg-1068, Thr-1099–Gly-1121, Thr-1122–Glu-1143, Thr-1161–Glu-1183, and Thr-1188–Gly-1210. Residues Val-1215–Leu-1236 are compositionally biased toward polar residues. The tract at residues Val-1215–Gly-1238 is disordered. Hemolysin-type calcium-binding repeat units lie at residues Gly-1229 to Glu-1243, Gly-1247 to Leu-1263, Gly-1265 to Phe-1281, Gly-1398 to Leu-1414, Val-1415 to Phe-1432, Glu-1536 to Val-1552, His-1554 to Phe-1571, Gly-1670 to Ser-1681, Gly-1688 to Leu-1704, and Gly-1706 to Phe-1722.

It belongs to the D-mannuronate C5-epimerase family. Ca(2+) serves as cofactor.

It is found in the secreted. The enzyme catalyses [(1-&gt;4)-beta-D-mannuronosyl](n) = [alginate](n). It functions in the pathway glycan biosynthesis; alginate biosynthesis. Its activity is regulated as follows. Inhibited by zinc. Functionally, converts beta-D-mannuronic acid (M) to alpha-L-guluronic acid (G), producing a polymer with gel-forming capacity, required for the formation of the cyst coat. The chain is Mannuronan C5-epimerase AlgE3 from Azotobacter vinelandii.